Consider the following 1072-residue polypeptide: Carbamoyl phosphate synthase large chain (1072 aa).

The interval 1–401 (MPKRLDINTI…SLLKAVRSLE (401 aa)) is carboxyphosphate synthetic domain. Arg129, Arg169, Gly175, Gly176, Lys208, Ile210, Glu215, Gly241, Val242, His243, Gln284, and Glu298 together coordinate ATP. Residues 133 to 327 (RTLMQELNEP…IAKLAAKIAV (195 aa)) form the ATP-grasp 1 domain. 3 residues coordinate Mg(2+): Gln284, Glu298, and Asn300. 3 residues coordinate Mn(2+): Gln284, Glu298, and Asn300. The segment at 402–546 (LGIYHLELNH…YSTYGDENES (145 aa)) is oligomerization domain. Positions 547–929 (IVTERKSVMV…ALYKGLVAAG (383 aa)) are carbamoyl phosphate synthetic domain. The region spanning 671 to 861 (EAALTELGIP…MANIATKVIL (191 aa)) is the ATP-grasp 2 domain. Positions 707, 746, 752, 777, 778, 779, 780, 820, and 832 each coordinate ATP. Residues Gln820, Glu832, and Asn834 each coordinate Mg(2+). 3 residues coordinate Mn(2+): Gln820, Glu832, and Asn834. Residues 930-1072 (ISIPTHGSVI…PTTRHEVVHA (143 aa)) enclose the MGS-like domain. The allosteric domain stretch occupies residues 930–1072 (ISIPTHGSVI…PTTRHEVVHA (143 aa)).

Belongs to the CarB family. Composed of two chains; the small (or glutamine) chain promotes the hydrolysis of glutamine to ammonia, which is used by the large (or ammonia) chain to synthesize carbamoyl phosphate. Tetramer of heterodimers (alpha,beta)4. Requires Mg(2+) as cofactor. It depends on Mn(2+) as a cofactor.

It carries out the reaction hydrogencarbonate + L-glutamine + 2 ATP + H2O = carbamoyl phosphate + L-glutamate + 2 ADP + phosphate + 2 H(+). The enzyme catalyses hydrogencarbonate + NH4(+) + 2 ATP = carbamoyl phosphate + 2 ADP + phosphate + 2 H(+). It functions in the pathway amino-acid biosynthesis; L-arginine biosynthesis; carbamoyl phosphate from bicarbonate: step 1/1. The protein operates within pyrimidine metabolism; UMP biosynthesis via de novo pathway; (S)-dihydroorotate from bicarbonate: step 1/3. Large subunit of the glutamine-dependent carbamoyl phosphate synthetase (CPSase). CPSase catalyzes the formation of carbamoyl phosphate from the ammonia moiety of glutamine, carbonate, and phosphate donated by ATP, constituting the first step of 2 biosynthetic pathways, one leading to arginine and/or urea and the other to pyrimidine nucleotides. The large subunit (synthetase) binds the substrates ammonia (free or transferred from glutamine from the small subunit), hydrogencarbonate and ATP and carries out an ATP-coupled ligase reaction, activating hydrogencarbonate by forming carboxy phosphate which reacts with ammonia to form carbamoyl phosphate. The polypeptide is Carbamoyl phosphate synthase large chain (Bacillus cytotoxicus (strain DSM 22905 / CIP 110041 / 391-98 / NVH 391-98)).